A 273-amino-acid chain; its full sequence is NADPH-dependent 7-cyano-7-deazaguanine reductase (273 aa).

80–82 (IES) lines the substrate pocket. Position 82 to 83 (82 to 83 (SK)) interacts with NADPH. The Thioimide intermediate role is filled by Cys-180. Residue Asp-187 is the Proton donor of the active site. Residue 219-220 (HE) participates in substrate binding. 248–249 (RG) contacts NADPH.

Belongs to the GTP cyclohydrolase I family. QueF type 2 subfamily. In terms of assembly, homodimer.

The protein resides in the cytoplasm. It catalyses the reaction 7-aminomethyl-7-carbaguanine + 2 NADP(+) = 7-cyano-7-deazaguanine + 2 NADPH + 3 H(+). It participates in tRNA modification; tRNA-queuosine biosynthesis. In terms of biological role, catalyzes the NADPH-dependent reduction of 7-cyano-7-deazaguanine (preQ0) to 7-aminomethyl-7-deazaguanine (preQ1). This Bordetella avium (strain 197N) protein is NADPH-dependent 7-cyano-7-deazaguanine reductase.